Consider the following 431-residue polypeptide: Histidine--tRNA ligase (431 aa).

Belongs to the class-II aminoacyl-tRNA synthetase family. As to quaternary structure, homodimer.

Its subcellular location is the cytoplasm. It carries out the reaction tRNA(His) + L-histidine + ATP = L-histidyl-tRNA(His) + AMP + diphosphate + H(+). In Neisseria meningitidis serogroup B (strain ATCC BAA-335 / MC58), this protein is Histidine--tRNA ligase.